A 254-amino-acid chain; its full sequence is Ribonuclease HII (254 aa).

The RNase H type-2 domain maps to 70–254 (TCIAGIDEAG…SFAPVKSVIS (185 aa)). 3 residues coordinate a divalent metal cation: D76, E77, and D168.

This sequence belongs to the RNase HII family. Requires Mn(2+) as cofactor. Mg(2+) serves as cofactor.

The protein resides in the cytoplasm. The catalysed reaction is Endonucleolytic cleavage to 5'-phosphomonoester.. Its function is as follows. Endonuclease that specifically degrades the RNA of RNA-DNA hybrids. The sequence is that of Ribonuclease HII from Bacillus pumilus (strain SAFR-032).